Here is a 358-residue protein sequence, read N- to C-terminus: Mannonate dehydratase (358 aa).

Belongs to the mannonate dehydratase family. Fe(2+) serves as cofactor. Mn(2+) is required as a cofactor.

The catalysed reaction is D-mannonate = 2-dehydro-3-deoxy-D-gluconate + H2O. Its pathway is carbohydrate metabolism; pentose and glucuronate interconversion. Catalyzes the dehydration of D-mannonate. The chain is Mannonate dehydratase from Lactococcus lactis subsp. cremoris (strain MG1363).